Reading from the N-terminus, the 419-residue chain is Probable pectate lyase C (419 aa).

A signal peptide spans 1–19; sequence MRLTPSLISCLSLLHFTSA. 3 N-linked (GlcNAc...) asparagine glycosylation sites follow: asparagine 48, asparagine 164, and asparagine 201. Arginine 204 is a catalytic residue. In terms of domain architecture, EF-hand spans 261-296; the sequence is NENFHAYVETNYYDSDKDGTLNGSELGVDSTNYGGM. The Ca(2+) site is built by aspartate 274, aspartate 276, aspartate 278, and threonine 280. Residue asparagine 282 is glycosylated (N-linked (GlcNAc...) asparagine). Glutamate 285 is a Ca(2+) binding site. The tract at residues 352–395 is disordered; that stretch reads ISDEADMGGAGDLDQGTTPTDTDGDGIPDDAEAELGTDPNTADS. Over residues 363 to 372 the composition is skewed to low complexity; the sequence is DLDQGTTPTD. Residues 373-386 are compositionally biased toward acidic residues; it reads TDGDGIPDDAEAEL.

It belongs to the polysaccharide lyase 1 family. Ca(2+) serves as cofactor.

Its subcellular location is the secreted. It carries out the reaction Eliminative cleavage of (1-&gt;4)-alpha-D-galacturonan to give oligosaccharides with 4-deoxy-alpha-D-galact-4-enuronosyl groups at their non-reducing ends.. Functionally, pectinolytic enzyme consist of four classes of enzymes: pectin lyase, polygalacturonase, pectin methylesterase and rhamnogalacturonase. Among pectinolytic enzymes, pectin lyase is the most important in depolymerization of pectin, since it cleaves internal glycosidic bonds of highly methylated pectins. Favors pectate, the anion, over pectin, the methyl ester. The sequence is that of Probable pectate lyase C (plyC) from Aspergillus oryzae (strain ATCC 42149 / RIB 40) (Yellow koji mold).